A 96-amino-acid polypeptide reads, in one-letter code: Co-chaperonin GroES (96 aa).

The protein belongs to the GroES chaperonin family. Heptamer of 7 subunits arranged in a ring. Interacts with the chaperonin GroEL.

The protein resides in the cytoplasm. Together with the chaperonin GroEL, plays an essential role in assisting protein folding. The GroEL-GroES system forms a nano-cage that allows encapsulation of the non-native substrate proteins and provides a physical environment optimized to promote and accelerate protein folding. GroES binds to the apical surface of the GroEL ring, thereby capping the opening of the GroEL channel. The polypeptide is Co-chaperonin GroES (Shewanella piezotolerans (strain WP3 / JCM 13877)).